The sequence spans 267 residues: Small ribosomal subunit protein eS4 (267 aa).

An S4 RNA-binding domain is found at 42–104 (LPLILVLRNR…TKENFRLLFD (63 aa)).

This sequence belongs to the eukaryotic ribosomal protein eS4 family.

It localises to the cytoplasm. The chain is Small ribosomal subunit protein eS4 (rps4) from Dictyostelium discoideum (Social amoeba).